A 149-amino-acid chain; its full sequence is Transcriptional repressor NrdR (149 aa).

The segment at 3–34 (CPFCSATDTKVIDSRLVADGHQVRRRRECTEC) is a zinc-finger region. The ATP-cone domain occupies 49–139 (PRVIKRDGTR…VYRAFEDVSQ (91 aa)).

This sequence belongs to the NrdR family. It depends on Zn(2+) as a cofactor.

Functionally, negatively regulates transcription of bacterial ribonucleotide reductase nrd genes and operons by binding to NrdR-boxes. The sequence is that of Transcriptional repressor NrdR from Shewanella frigidimarina (strain NCIMB 400).